Consider the following 155-residue polypeptide: Putative pre-16S rRNA nuclease (155 aa).

This sequence belongs to the YqgF nuclease family.

Its subcellular location is the cytoplasm. Could be a nuclease involved in processing of the 5'-end of pre-16S rRNA. This is Putative pre-16S rRNA nuclease from Xanthomonas oryzae pv. oryzae (strain MAFF 311018).